A 100-amino-acid polypeptide reads, in one-letter code: NADH-quinone oxidoreductase subunit K (100 aa).

A run of 3 helical transmembrane segments spans residues 4–24 (YEYY…GVIV), 28–48 (IIAM…AFVA), and 60–80 (VFVF…LGLI).

Belongs to the complex I subunit 4L family. NDH-1 is composed of 14 different subunits. Subunits NuoA, H, J, K, L, M, N constitute the membrane sector of the complex.

The protein resides in the cell inner membrane. It carries out the reaction a quinone + NADH + 5 H(+)(in) = a quinol + NAD(+) + 4 H(+)(out). Functionally, NDH-1 shuttles electrons from NADH, via FMN and iron-sulfur (Fe-S) centers, to quinones in the respiratory chain. The immediate electron acceptor for the enzyme in this species is believed to be ubiquinone. Couples the redox reaction to proton translocation (for every two electrons transferred, four hydrogen ions are translocated across the cytoplasmic membrane), and thus conserves the redox energy in a proton gradient. The chain is NADH-quinone oxidoreductase subunit K from Sulfurihydrogenibium azorense (strain DSM 15241 / OCM 825 / Az-Fu1).